A 182-amino-acid polypeptide reads, in one-letter code: Oligoribonuclease (182 aa).

Residues 8–171 (LIWIDLEMTG…DDIRESIKEL (164 aa)) enclose the Exonuclease domain. Tyrosine 129 is a catalytic residue.

It belongs to the oligoribonuclease family.

It localises to the cytoplasm. Functionally, 3'-to-5' exoribonuclease specific for small oligoribonucleotides. This is Oligoribonuclease (orn) from Haemophilus influenzae (strain ATCC 51907 / DSM 11121 / KW20 / Rd).